A 359-amino-acid polypeptide reads, in one-letter code: DNA-directed RNA polymerase RPB3-11 homolog (359 aa).

It in the N-terminal section; belongs to the archaeal RpoD/eukaryotic RPB3 RNA polymerase subunit family. This sequence in the C-terminal section; belongs to the archaeal RpoL/eukaryotic RPB11/RPC19 RNA polymerase subunit family. In terms of assembly, part of the viral DNA-directed RNA polymerase that consists of 8 polII-like subunits (RPB1, RPB2, RPB3, RPB5, RPB6, RPB7, RPB9, RPB10), a capping enzyme and a termination factor.

It is found in the host cytoplasm. The protein localises to the virion. Component of the DNA-directed RNA polymerase (RNAP) that catalyzes the transcription in the cytoplasm of viral DNA into RNA using the four ribonucleoside triphosphates as substrates. This chain is DNA-directed RNA polymerase RPB3-11 homolog, found in Ornithodoros (relapsing fever ticks).